The primary structure comprises 270 residues: Electron transfer flavoprotein subunit beta (270 aa).

The protein belongs to the ETF alpha-subunit/FixB family. As to quaternary structure, heterodimer of an alpha and a beta subunit. FAD is required as a cofactor.

The electron transfer flavoprotein serves as a specific electron acceptor for other dehydrogenases. It transfers the electrons to the main respiratory chain via ETF-ubiquinone oxidoreductase (ETF dehydrogenase). This is Electron transfer flavoprotein subunit beta (etfB) from Megasphaera elsdenii.